Here is a 539-residue protein sequence, read N- to C-terminus: Chaperonin GroEL (539 aa).

ATP is bound by residues 30-33, Lys-51, 87-91, Gly-415, 479-481, and Asp-495; these read TLGP, DGTTT, and NAA.

Belongs to the chaperonin (HSP60) family. As to quaternary structure, forms a cylinder of 14 subunits composed of two heptameric rings stacked back-to-back. Interacts with the co-chaperonin GroES.

The protein localises to the cytoplasm. The enzyme catalyses ATP + H2O + a folded polypeptide = ADP + phosphate + an unfolded polypeptide.. Functionally, together with its co-chaperonin GroES, plays an essential role in assisting protein folding. The GroEL-GroES system forms a nano-cage that allows encapsulation of the non-native substrate proteins and provides a physical environment optimized to promote and accelerate protein folding. In Kluyvera intermedia (Enterobacter intermedius), this protein is Chaperonin GroEL.